Reading from the N-terminus, the 192-residue chain is Amelogenin, Y isoform (192 aa).

The N-terminal stretch at 1-16 (MGTWILFACLLGAAYS) is a signal peptide. Residues 73–192 (QSPQNHALQP…TDKTKREEVD (120 aa)) are disordered. Over residues 87-105 (PMVPAQQPVVPQQPMMPVP) the composition is skewed to low complexity. Residues 108-117 (HSMTPIQHHQ) show a composition bias toward polar residues. The span at 132–173 (PIQPQPHQPLQPQPPVHPIQRLPPQPPLPPIFPMQPLPPVLP) shows a compositional bias: pro residues.

Belongs to the amelogenin family.

It is found in the secreted. It localises to the extracellular space. Its subcellular location is the extracellular matrix. Plays a role in the biomineralization of teeth. Seems to regulate the formation of crystallites during the secretory stage of tooth enamel development. Thought to play a major role in the structural organization and mineralization of developing enamel. This chain is Amelogenin, Y isoform (AMELY), found in Bos taurus (Bovine).